The chain runs to 219 residues: Multiple organellar RNA editing factor 2, chloroplastic (219 aa).

The N-terminal 48 residues, 1–48 (MALPLSGTRHLTRALLSNVTLMAPPRIPSSVHYGGSRLGCSTRFFSIR), are a transit peptide targeting the chloroplast. The disordered stretch occupies residues 182–219 (VQRSPERQRRVEPQPQRAQDRPRYNDRTRYSRRRENTR). Basic and acidic residues predominate over residues 185–219 (SPERQRRVEPQPQRAQDRPRYNDRTRYSRRRENTR).

Belongs to the MORF family. In terms of assembly, homodimer and heterodimer with MORF9. Interacts with protoporphyrinogen oxidase 1 PPOX1. Heterodimers with MORF8/RIP1 and MORF9/RIP9. Interacts with PCMP-A2/PMD1. Interacts with ORRM1. Interacts with ORRM6.

The protein localises to the plastid. The protein resides in the chloroplast. Functionally, involved in plastid rRNA processing and consequently in translation and early chloroplast differentiation. Involved in organellar RNA editing. Required for the processing of multiple editing sites in plastids. The sequence is that of Multiple organellar RNA editing factor 2, chloroplastic from Arabidopsis thaliana (Mouse-ear cress).